Consider the following 91-residue polypeptide: Small ribosomal subunit protein uS19 (91 aa).

This sequence belongs to the universal ribosomal protein uS19 family.

Its function is as follows. Protein S19 forms a complex with S13 that binds strongly to the 16S ribosomal RNA. This chain is Small ribosomal subunit protein uS19, found in Prochlorococcus marinus (strain MIT 9211).